The following is a 316-amino-acid chain: MAVQVVQAVQAVHLESDAFLVCLNHALSTEKEEVMGLCIGELNDDTRSDSKFAYTGTEMRTVAEKVDAVRIVHIHSVIILRRSDKRKDRVEISPEQLSAASTEAERLAELTGRPMRVVGWYHSHPHITVWPSHVDVRTQAMYQMMDQGFVGLIFSCFIEDKNTKTGRVLYTCFQSIQAQKSSESLHGPRDFWSSSQHISIEGQKEEERYERIEIPIHIVPHVTIGKVCLESAVELPKILCQEEQDAYRRIHSLTHLDSVTKIHNGSVFTKNLCSQMSAVSGPLLQWLEDRLEQNQQHLQELQQEKEELMQELSSLE.

Residue alanine 2 is modified to N-acetylalanine. The MPN domain occupies 12–179; sequence VHLESDAFLV…YTCFQSIQAQ (168 aa). Histidine 122, histidine 124, and aspartate 135 together coordinate Zn(2+). Positions 122 to 135 match the JAMM motif motif; the sequence is HSHPHITVWPSHVD. Serine 258 is modified (phosphoserine).

The protein belongs to the peptidase M67A family. BRCC36 subfamily. As to quaternary structure, component of the ARISC complex, at least composed of UIMC1/RAP80, ABRAXAS1, BRCC3/BRCC36, BABAM2 and BABAM1/NBA1. Component of the BRCA1-A complex, at least composed of BRCA1, BARD1, UIMC1/RAP80, ABRAXAS1, BRCC3/BRCC36, babam2 and BABAM1/NBA1. In the BRCA1-A complex, interacts directly with ABRAXAS1 and babam2. Component of the BRISC complex, at least composed of ABRAXAS2, BRCC3/BRCC36, BABAM2 and BABAM1/NBA1. Identified in a complex with SHMT2 and the other subunits of the BRISC complex. In the BRISC complex, interacts directly with ABRAXAS2. Identified in a complex with ABRAXAS2 and NUMA1. The BRISC complex interacts with the CSN complex. Component of the BRCA1/BRCA2 containing complex (BRCC), which also contains BRCA1, BRCA2, BARD1, BABAM2 and RAD51. BRCC is a ubiquitin E3 ligase complex that enhances cellular survival following DNA damage. Interacts with BRCA1. Binds polyubiquitin. Interacts with PWWP2B. Interacts with HDAC1; this interaction is enhanced in the presence of PWWP2B. It depends on Zn(2+) as a cofactor. In terms of tissue distribution, heart, brain, placenta, lung, liver, skeletal muscle, kidney and pancreas. Aberrantly expressed in the vast majority of breast tumors.

The protein resides in the nucleus. The protein localises to the cytoplasm. It localises to the cytoskeleton. It is found in the spindle pole. In terms of biological role, metalloprotease that specifically cleaves 'Lys-63'-linked polyubiquitin chains. Does not have activity toward 'Lys-48'-linked polyubiquitin chains. Component of the BRCA1-A complex, a complex that specifically recognizes 'Lys-63'-linked ubiquitinated histones H2A and H2AX at DNA lesions sites, leading to target the BRCA1-BARD1 heterodimer to sites of DNA damage at double-strand breaks (DSBs). In the BRCA1-A complex, it specifically removes 'Lys-63'-linked ubiquitin on histones H2A and H2AX, antagonizing the RNF8-dependent ubiquitination at double-strand breaks (DSBs). Catalytic subunit of the BRISC complex, a multiprotein complex that specifically cleaves 'Lys-63'-linked ubiquitin in various substrates. Mediates the specific 'Lys-63'-specific deubiquitination associated with the COP9 signalosome complex (CSN), via the interaction of the BRISC complex with the CSN complex. The BRISC complex is required for normal mitotic spindle assembly and microtubule attachment to kinetochores via its role in deubiquitinating NUMA1. Plays a role in interferon signaling via its role in the deubiquitination of the interferon receptor IFNAR1; deubiquitination increases IFNAR1 activity by enhancing its stability and cell surface expression. Acts as a regulator of the NLRP3 inflammasome by mediating deubiquitination of NLRP3, leading to NLRP3 inflammasome assembly. Down-regulates the response to bacterial lipopolysaccharide (LPS) via its role in IFNAR1 deubiquitination. Deubiquitinates HDAC1 and PWWP2B leading to their stabilization. The chain is Lys-63-specific deubiquitinase BRCC36 (BRCC3) from Homo sapiens (Human).